The primary structure comprises 1036 residues: Exportin-T (1036 aa).

This sequence belongs to the exportin family.

It is found in the nucleus. The protein localises to the cytoplasm. Its function is as follows. tRNA nucleus export receptor which facilitates tRNA translocation across the nuclear pore complex. Involved in pre-tRNA splicing, probably by affecting the interaction of pre-tRNA with splicing endonuclease. The sequence is that of Exportin-T (LOS1) from Phaeosphaeria nodorum (strain SN15 / ATCC MYA-4574 / FGSC 10173) (Glume blotch fungus).